Here is a 598-residue protein sequence, read N- to C-terminus: Chromodomain Y-like protein (598 aa).

Positions 1-76 (MTFQASHRSA…VDKRKNKKGK (76 aa)) are disordered. Residues 44–56 (PSISVSSEQSGAQ) show a composition bias toward polar residues. A Chromo domain is found at 61-121 (LQVERIVDKR…RHTEKQKEST (61 aa)). The interval 61 to 309 (LQVERIVDKR…NIQTSVTGVT (249 aa)) is interaction with EZH2. Positions 65-76 (RIVDKRKNKKGK) are enriched in basic and acidic residues. Position 88 is a phosphoserine (S88). The span at 112 to 121 (RHTEKQKEST) shows a compositional bias: basic and acidic residues. The disordered stretch occupies residues 112-149 (RHTEKQKESTLTRTNRTSPNNARKQISRSTNSNFSKTS). A compositionally biased stretch (polar residues) spans 122-149 (LTRTNRTSPNNARKQISRSTNSNFSKTS). At K135 the chain carries N6,N6,N6-trimethyllysine; by EHMT2; alternate. At K135 the chain carries N6,N6-dimethyllysine; by EHMT2; alternate. K135 carries the post-translational modification N6-methyllysine; by EHMT2; alternate. Phosphoserine occurs at positions 170, 201, and 216. The interval 204–226 (KSRTAVDGFQSESPEKLDPVEQG) is disordered. An acetyl-CoA-binding domain region spans residues 362–594 (SENNSLNPEV…DSMLKYLQRK (233 aa)).

In terms of assembly, forms multimers and multimerization is required for stable binding to chromatin. Interacts with HDAC1 and HDAC2 via its C-terminal acetyl-CoA-binding domain. Interacts with EZH2, EED, SUZ12, REST, EHMT1 and EHMT2. Part of a complex containing at least CDYL, REST, WIZ, SETB1, EHMT1 and EHMT2. Part of a complex containing at least CDYL, MIER1, MIER2, HDAC1 and HDAC2. Interacts with CHAF1A and CHAF1B; bridging the CAF-1 complex to the MCM2-7 (MCM) complex. Interacts with MCM3 and MCM5; bridging the CAF-1 complex to the MCM2-7 (MCM) complex. Recruited to Xist RNA-coated X chromosome. Interacts with EHMT2 and PRDM9; interaction only takes place when PRDM9 is bound to hotspot DNA. As to expression, expressed in the hippocampus with reduced expression in epileptic tissue compared to normal adjacent tissue (at protein level). Ubiquitous. Expressed at moderate levels in all tissues examined. Isoform 2: Most abundantly expressed isoform.

The protein resides in the nucleus. The protein localises to the chromosome. The enzyme catalyses 3-hydroxybutanoyl-CoA = (2E)-butenoyl-CoA + H2O. Chromatin reader protein that recognizes and binds histone H3 trimethylated at 'Lys-9', dimethylated at 'Lys-27' and trimethylated at 'Lys-27' (H3K9me3, H3K27me2 and H3K27me3, respectively). Part of multimeric repressive chromatin complexes, where it is required for transmission and restoration of repressive histone marks, thereby preserving the epigenetic landscape. Required for chromatin targeting and maximal enzymatic activity of Polycomb repressive complex 2 (PRC2); acts as a positive regulator of PRC2 activity by bridging the pre-existing histone H3K27me3 and newly recruited PRC2 on neighboring nucleosomes. Acts as a corepressor for REST by facilitating histone-lysine N-methyltransferase EHMT2 recruitment and H3K9 dimethylation at REST target genes for repression. Involved in X chromosome inactivation in females: recruited to Xist RNA-coated X chromosome and facilitates propagation of H3K9me2 by anchoring EHMT2. Promotes EZH2 accumulation and H3K27me3 methylation at DNA double strand breaks (DSBs), thereby facilitating transcriptional repression at sites of DNA damage and homology-directed repair of DSBs. Required for neuronal migration during brain development by repressing expression of RHOA. By repressing the expression of SCN8A, contributes to the inhibition of intrinsic neuronal excitability and epileptogenesis. In addition to acting as a chromatin reader, acts as a hydro-lyase. Shows crotonyl-coA hydratase activity by mediating the conversion of crotonyl-CoA ((2E)-butenoyl-CoA) to beta-hydroxybutyryl-CoA (3-hydroxybutanoyl-CoA), thereby acting as a negative regulator of histone crotonylation. Histone crotonylation is required during spermatogenesis; down-regulation of histone crotonylation by CDYL regulates the reactivation of sex chromosome-linked genes in round spermatids and histone replacement in elongating spermatids. By regulating histone crotonylation and trimethylation of H3K27, may be involved in stress-induced depression-like behaviors, possibly by regulating VGF expression. Functionally, not able to recognize and bind histone H3K9me3, histone H3K27me2 and histone H3K27me3, due to the presence of a N-terminal extension that inactivates the chromo domain. In terms of biological role, not able to recognize and bind histone H3K9me3, histone H3K27me2 and histone H3K27me3, due to the absence of the chromo domain. Acts as a negative regulator of isoform 2 by displacing isoform 2 from chromatin. This chain is Chromodomain Y-like protein, found in Homo sapiens (Human).